Consider the following 1368-residue polypeptide: Protein suppressor 2 of zeste (1368 aa).

Residues 35–74 (CRLCRGYMIDPTTVDYCYHTYCRSCILKHLLRAVYCPECK) form an RING-type zinc finger. Disordered stretches follow at residues 245-321 (SRIN…FKSL), 448-628 (QPLQ…QQQQ), 640-718 (TLPT…AVPQ), 861-903 (AGGK…KRSC), 935-1001 (ALSG…NGTA), 1057-1103 (SANP…STSN), 1116-1141 (ISAN…GDDL), 1161-1193 (AASS…ASVR), 1211-1271 (STAA…KKPT), and 1298-1322 (VLSS…RPEP). Polar residues predominate over residues 449-461 (PLQQSASNPDSKY). Over residues 462–495 (SPNASPMSSCSSSTNGSSSSLGTADASTSTSTSS) the composition is skewed to low complexity. The segment covering 496–506 (SHRKRKKKHSK) has biased composition (basic residues). Composition is skewed to low complexity over residues 599 to 628 (AEPE…QQQQ) and 672 to 689 (PKQQ…VLQQ). 2 stretches are compositionally biased toward polar residues: residues 936-953 (LSGQ…NAYR) and 962-977 (LRNT…SKSS). Composition is skewed to low complexity over residues 1078-1099 (NNNN…NNNN), 1119-1138 (NSNG…TTNG), 1161-1183 (AASS…NANA), and 1231-1263 (STSN…ATSP).

Its subcellular location is the nucleus. Regulates expression of the homeotic selector genes by influencing higher-order chromatin structure through interaction with other proteins. The chain is Protein suppressor 2 of zeste (Su(z)2) from Drosophila melanogaster (Fruit fly).